Consider the following 290-residue polypeptide: Programmed cell death 1 ligand 1 (290 aa).

Positions 1–18 are cleaved as a signal peptide; the sequence is MRIFAVFIFMTYWHLLNA. Residues 19–127 enclose the Ig-like V-type domain; that stretch reads FTVTVPKDLY…YGGADYKRIT (109 aa). Residues 19-238 lie on the Extracellular side of the membrane; it reads FTVTVPKDLY…LPLAHPPNER (220 aa). An N-linked (GlcNAc...) asparagine glycan is attached at Asn35. Intrachain disulfides connect Cys40–Cys114 and Cys155–Cys209. The Ig-like C2-type domain maps to 133 to 225; the sequence is PYNKINQRIL…PEENHTAELV (93 aa). N-linked (GlcNAc...) asparagine glycans are attached at residues Asn192, Asn200, and Asn219. The helical transmembrane segment at 239 to 259 threads the bilayer; the sequence is THLVILGAILLCLGVALTFIF. Residues 260-290 lie on the Cytoplasmic side of the membrane; it reads RLRKGRMMDVKKCGIQDTNSKKQSDTHLEET.

It belongs to the immunoglobulin superfamily. BTN/MOG family. In terms of assembly, interacts with PDCD1. Interacts (via transmembrane domain) with CMTM4 and CMTM6. Interacts with (phosphorylated) STAT3; promoting nuclear translocation. Interacts with CD80. As to quaternary structure, may form homomultimers. Ubiquitinated; STUB1 likely mediates polyubiquitination of PD-L1/CD274 triggering its degradation. Ubiquitinated by MARCHF8; leading to degradation. Deubiquitinated by USP22; leading to stabilization. As to expression, highly expressed in the heart, skeletal muscle, placenta and lung. Weakly expressed in the thymus, spleen, kidney and liver. Expressed on activated T- and B-cells, dendritic cells, keratinocytes and monocytes. Widely expressed, highest in lung, liver and pituitary and in various peripheral blood cells, including neutrophils and some subtypes of lymphoid and myeloid cells.

The protein resides in the cell membrane. The protein localises to the early endosome membrane. It localises to the recycling endosome membrane. Its subcellular location is the nucleus. It is found in the endomembrane system. The protein resides in the secreted. Functionally, plays a critical role in induction and maintenance of immune tolerance to self. As a ligand for the inhibitory receptor PDCD1/PD-1, modulates the activation threshold of T-cells and limits T-cell effector response. Through a yet unknown activating receptor, may costimulate T-cell subsets that predominantly produce interleukin-10 (IL10). Can also act as a transcription coactivator: in response to hypoxia, translocates into the nucleus via its interaction with phosphorylated STAT3 and promotes transcription of GSDMC, leading to pyroptosis. Its function is as follows. The PDCD1-mediated inhibitory pathway is exploited by tumors to attenuate anti-tumor immunity and escape destruction by the immune system, thereby facilitating tumor survival. The interaction with PDCD1/PD-1 inhibits cytotoxic T lymphocytes (CTLs) effector function. The blockage of the PDCD1-mediated pathway results in the reversal of the exhausted T-cell phenotype and the normalization of the anti-tumor response, providing a rationale for cancer immunotherapy. The protein is Programmed cell death 1 ligand 1 of Homo sapiens (Human).